The chain runs to 140 residues: ATP synthase epsilon chain (140 aa).

Belongs to the ATPase epsilon chain family. F-type ATPases have 2 components, CF(1) - the catalytic core - and CF(0) - the membrane proton channel. CF(1) has five subunits: alpha(3), beta(3), gamma(1), delta(1), epsilon(1). CF(0) has three main subunits: a, b and c.

It localises to the cell inner membrane. Functionally, produces ATP from ADP in the presence of a proton gradient across the membrane. This is ATP synthase epsilon chain from Laribacter hongkongensis (strain HLHK9).